The chain runs to 590 residues: uncharacterized protein (590 aa).

Residues methionine 1–tyrosine 68 lie on the Cytoplasmic side of the membrane. The chain crosses the membrane as a helical span at residues valine 69–valine 89. The Extracellular portion of the chain corresponds to glutamate 90–serine 94. A helical membrane pass occupies residues tryptophan 95–isoleucine 115. Topologically, residues alanine 116–histidine 124 are cytoplasmic. The helical transmembrane segment at isoleucine 125 to leucine 145 threads the bilayer. The Extracellular portion of the chain corresponds to asparagine 146–valine 149. A helical membrane pass occupies residues methionine 150–isoleucine 170. Topologically, residues arginine 171–tryptophan 194 are cytoplasmic. A helical membrane pass occupies residues valine 195–isoleucine 215. Topologically, residues arginine 216–leucine 218 are extracellular. Residues phenylalanine 219 to valine 239 traverse the membrane as a helical segment. The Cytoplasmic portion of the chain corresponds to lysine 240–asparagine 258. Residues histidine 259–valine 279 traverse the membrane as a helical segment. Topologically, residues asparagine 280 to glutamine 298 are extracellular. Residues leucine 299 to alanine 319 form a helical membrane-spanning segment. Topologically, residues serine 320–arginine 390 are cytoplasmic. The chain crosses the membrane as a helical span at residues glycine 391 to serine 411. Residues asparagine 412 to leucine 418 are Extracellular-facing. A helical membrane pass occupies residues serine 419–isoleucine 439. Over arginine 440 to arginine 467 the chain is Cytoplasmic. The chain crosses the membrane as a helical span at residues alanine 468–glycine 488. Residues aspartate 489–asparagine 500 are Extracellular-facing. Residues isoleucine 501 to phenylalanine 521 form a helical membrane-spanning segment. Residues proline 522–phenylalanine 590 are Cytoplasmic-facing. The tract at residues valine 566 to phenylalanine 590 is disordered.

This sequence belongs to the purine-cytosine permease (2.A.39) family.

It is found in the cytoplasm. Its subcellular location is the nucleus. The protein resides in the membrane. This is an uncharacterized protein from Schizosaccharomyces pombe (strain 972 / ATCC 24843) (Fission yeast).